Consider the following 484-residue polypeptide: Probable chitinase 2 (484 aa).

A signal peptide spans 1–33; sequence MTLRSRLSGEAPQLWLLLLLASTASSLWASVAA. Residues 41 to 432 enclose the GH18 domain; it reads KVVVCYVSTW…RTINEATMLA (392 aa). Cysteines 45 and 70 form a disulfide. Residues 98–99 and 125–128 each bind chitin; these read EE and GGWN. Glu168 functions as the Proton donor in the catalytic mechanism. Chitin is bound by residues Tyr169, 231 to 234, and Trp384; that span reads MCYD. Ser467 carries the phosphoserine modification.

Belongs to the glycosyl hydrolase 18 family. Chitinase class II subfamily.

It carries out the reaction Random endo-hydrolysis of N-acetyl-beta-D-glucosaminide (1-&gt;4)-beta-linkages in chitin and chitodextrins.. The protein is Probable chitinase 2 of Drosophila melanogaster (Fruit fly).